The following is a 350-amino-acid chain: MEAIRKELSRSYQELNDETDPIARDPEGAQEEEQEEAASAVVPDRDSDRSNTRVHFSRTCLKNVFSVLLIFVYLLLMGVAVFLVYQTITDFRDKLKHPVMSVSYKEVNVYDAPGIALYPGKARLLSCKHHLYDHIPPLIDPGQPGENTCITQNISYTDPYTNSTVKHALIVQGPRDVRRRELVFLQFHLNETKQDFSAIDYLLFSSYDAFLKSTNRVRFMQDCESSFSSWKFSGGFRTWVKMSLVKTKEEDGSQSVEFRQETSVVNFIDRRENPDKGDQLFFVVFEWKDPYIQEIQDIITANPWSMIALLCSVFLVLFKAADFAKLSVKWMIKVRRRHLKKRTRELNHIS.

Residues 1-51 (MEAIRKELSRSYQELNDETDPIARDPEGAQEEEQEEAASAVVPDRDSDRSN) are disordered. Over 1–63 (MEAIRKELSR…VHFSRTCLKN (63 aa)) the chain is Cytoplasmic. Residues 64-84 (VFSVLLIFVYLLLMGVAVFLV) form a helical membrane-spanning segment. Residues 85-297 (YQTITDFRDK…KDPYIQEIQD (213 aa)) lie on the Extracellular side of the membrane. A helical membrane pass occupies residues 298-318 (IITANPWSMIALLCSVFLVLF). Residues 319–350 (KAADFAKLSVKWMIKVRRRHLKKRTRELNHIS) lie on the Cytoplasmic side of the membrane.

Belongs to the proton-activated chloride channel family.

Its subcellular location is the cell membrane. It catalyses the reaction chloride(in) = chloride(out). Its function is as follows. Chloride channel gated by pH that facilitates the entry of chloride ions into cells upon exposure to extracellular acidic pH. The chain is Proton-activated chloride channel from Xenopus laevis (African clawed frog).